A 254-amino-acid polypeptide reads, in one-letter code: Coproheme decarboxylase (254 aa).

Fe-coproporphyrin III contacts are provided by residues arginine 136, 150–154 (YPMDK), histidine 177, glutamine 190, and serine 228. Tyrosine 150 is an active-site residue.

Belongs to the ChdC family. Type 1 subfamily. It depends on Fe-coproporphyrin III as a cofactor.

It carries out the reaction Fe-coproporphyrin III + 2 H2O2 + 2 H(+) = heme b + 2 CO2 + 4 H2O. The enzyme catalyses Fe-coproporphyrin III + H2O2 + H(+) = harderoheme III + CO2 + 2 H2O. It catalyses the reaction harderoheme III + H2O2 + H(+) = heme b + CO2 + 2 H2O. Its pathway is porphyrin-containing compound metabolism; protoheme biosynthesis. Its function is as follows. Involved in coproporphyrin-dependent heme b biosynthesis. Catalyzes the decarboxylation of Fe-coproporphyrin III (coproheme) to heme b (protoheme IX), the last step of the pathway. The reaction occurs in a stepwise manner with a three-propionate intermediate. The sequence is that of Coproheme decarboxylase from Bacillus licheniformis (strain ATCC 14580 / DSM 13 / JCM 2505 / CCUG 7422 / NBRC 12200 / NCIMB 9375 / NCTC 10341 / NRRL NRS-1264 / Gibson 46).